We begin with the raw amino-acid sequence, 2474 residues long: Polyprotein P1234 (2474 aa).

Positions 28 to 259 constitute an Alphavirus-like MT domain; sequence EPRQVTPNDH…ESRKLLKSWH (232 aa). The For mRNA-capping enzyme nsP1 activity role is filled by His37. Residues His79, Glu129, Cys134, and Cys141 each contribute to the Zn(2+) site. The segment at 295–450 is membrane-binding and oligomerization; it reads GLYGKTTGYA…QKVQAEFDSF (156 aa). Residues Cys417 and Cys419 are each lipidated (S-palmitoyl cysteine; by host). A disordered region spans residues 482–502; the sequence is PYSGDAQEARDAEKEAEEERE. Residues 690-842 enclose the (+)RNA virus helicase ATP-binding domain; sequence DLTNPPYHEF…HNICTQVYHK (153 aa). 721 to 728 is an a ribonucleoside 5'-triphosphate binding site; sequence GVPGSGKS. A (+)RNA virus helicase C-terminal domain is found at 843 to 991; the sequence is SISRRCTLPV…IKEWEVEHAS (149 aa). Positions 1004 to 1327 constitute a Peptidase C9 domain; that stretch reads DTFQNKANVC…NQLNAAFVGQ (324 aa). Residues 1005-1024 form a nucleolus localization signal region; the sequence is TFQNKANVCWAKSLVPILET. Residue Cys1013 is the For cysteine protease nsP2 activity of the active site. Positions 1058–1067 match the Nuclear export signal motif; the sequence is TRMYGVDLDS. The active-site For cysteine protease nsP2 activity is His1083. The Nuclear localization signal motif lies at 1182–1186; it reads PTKRV. The Macro domain occupies 1334-1493; the sequence is APSYRVKRMD…KISEAIQMRT (160 aa). Asp1343, Asn1357, Gly1365, Gly1445, Val1446, and Tyr1447 together coordinate ADP-D-ribose. Cys1595, Cys1597, Cys1620, and Cys1638 together coordinate Zn(2+). The disordered stretch occupies residues 1651 to 1672; sequence RVSPREYRPSQESVQEASTTTS. The segment at 1659–1857 is HVD; the sequence is PSQESVQEAS…TCSDTDDELR (199 aa). A compositionally biased stretch (polar residues) spans 1660–1672; the sequence is SQESVQEASTTTS. Interaction with host CD2AP stretches follow at residues 1726-1739 and 1756-1767; these read VMST…RRRR and PMASVRFFRAEL. The tract at residues 1745–1793 is interaction with host FHL1; sequence VTCDEREGNITPMASVRFFRAELCPVVQETAETRDTAMSLQAPPSTATE. The FGDF; binding to host G3BP1 motif lies at 1812–1815; that stretch reads FGDF. The tract at residues 1820 to 1828 is interaction with host CD2AP; it reads IESLSSELL. An FGDF; binding to host G3BP1 motif is present at residues 1830-1833; that stretch reads FGDF. In terms of domain architecture, RdRp catalytic spans 2228-2343; it reads DTVLETDIAS…HGVVSDELMA (116 aa).

As to quaternary structure, homododecamer. The enzyme forms a membrane-associated dodecameric ring with a central channel for the exchange of between the viral replication factories and the host cytoplasm. Interacts with non-structural protein 3. Interacts with RNA-directed RNA polymerase nsP4. Interacts with protease nsP2. Interacts with itself. Interacts with host STING1; this interaction results in inhibition of cGAS-STING signaling and increased levels of palmitoylation and protein stabilization of nsP1. Interacts with host TMEM45B; this interaction leads to viral replication inhibition. Interacts with mRNA-capping enzyme nsP1. Interacts (via C-terminus) with host G3BP1; this interaction inhibits the formation of host stress granules on viral mRNAs and the nsp3-G3BP1 complexes bind viral RNAs and probably orchestrate the assembly of viral replication complexes. Interacts (via C-terminus) with host G3BP2; this interaction inhibits the formation of host stress granules on viral mRNAs and the nsp3-G3BP2 complexes bind viral RNAs and probably orchestrate the assembly of viral replication complexes. Interacts (via C-terminus) with host NAP1L1. Interacts (via C-terminus) with host NAP1L4. Interacts (via C-terminus) with host DHX9; this interaction allows the recruitment of DHX9 to the plasma membrane, where it associates with viral replication complexes and may play a role in the translation-to-replication switch. Interacts (via C-terminus) with host FHL1 (via LIM domain 1); this interaction is required for viral RNA replication. Interacts (via C-terminus) with host CD2AP; this interaction plays a role in initiation of viral replication. Interacts (via C-terminus) with host SH3KBP1; this interaction plays a role in initiation of viral replication. In terms of assembly, interacts with mRNA-capping enzyme nsP1. Interacts with protease nsP2. interacts with itself. Interacts with host TMEM45B; this interaction leads to viral replication inhibition. As to quaternary structure, interacts with RNA-directed RNA polymerase nsP4. Interacts with mRNA-capping enzyme nsP1. Interacts with KPNA1/karyopherin-alpha1; this interaction probably allows the active transport of protease nsP2 into the host nucleus. The cofactor is Mg(2+). Mn(2+) is required as a cofactor. Post-translationally, specific enzymatic cleavages in vivo yield mature proteins. The processing of the polyprotein is temporally regulated. In early stages (1.7 hpi), P1234 is first cleaved in trans through its nsP2 protease activity, releasing P123 and nsP4, which associate to form the early replication complex. At the same time, P1234 is also cut at the nsP1/nsP2 site early in infection but with lower efficiency. After replication of the viral minus-strand RNAs (4 hpi), the polyproteins are cut at the nsP1/nsP2 and nsP2/nsP3 sites very efficiently, preventing accumulation of P123 and P1234 and allowing the formation of the late replication complex. NsP3/nsP4 site is not cleaved anymore and P34 is produced rather than nsP4. Specific enzymatic cleavages in vivo yield mature proteins. The processing of the polyprotein is temporally regulated. In early stages (1.7 hpi), P123 is cleaved at the nsP1/nsP2 site with low efficiency. After replication of the viral minus-strand RNAs (4 hpi), the polyproteins are cut at the nsP1/nsP2 and nsP2/nsP3 sites very efficiently, preventing accumulation of P123 and allowing the formation of the late replication complex. In terms of processing, palmitoylated by host palmitoyltransferases ZDHHC2 and ZDHHC19. Palmitoylation is increased by the interacton with host STING1. Post-translationally, phosphorylated by host on serines and threonines. Ubiquitinated; targets the protein for rapid degradation via the ubiquitin system. Nsp4 is present in extremely low quantities due to low frequency of translation through the amber stop-codon and the degradation by the ubiquitin pathway.

Its subcellular location is the host cytoplasmic vesicle membrane. The protein resides in the host cell membrane. The protein localises to the host cell projection. It is found in the host filopodium. It localises to the host nucleus. Its subcellular location is the host cytoplasm. It carries out the reaction GTP + S-adenosyl-L-methionine = N(7)-methyl-GTP + S-adenosyl-L-homocysteine. The catalysed reaction is N(7)-methyl-GTP + L-histidyl-[protein] = N(tele)-(N(7)-methylguanosine 5'-phospho)-L-histidyl-[protein] + diphosphate. The enzyme catalyses N(tele)-(N(7)-methylguanosine 5'-phospho)-L-histidyl-[protein] + a 5'-end diphospho-(purine-ribonucleoside) in mRNA + H(+) = a 5'-end (N(7)-methyl 5'-triphosphoguanosine)-(purine-ribonucleoside) in mRNA + L-histidyl-[protein]. It catalyses the reaction a 5'-end triphospho-ribonucleoside in mRNA + H2O = a 5'-end diphospho-ribonucleoside in mRNA + phosphate + H(+). It carries out the reaction a ribonucleoside 5'-triphosphate + H2O = a ribonucleoside 5'-diphosphate + phosphate + H(+). The catalysed reaction is ATP + H2O = ADP + phosphate + H(+). The enzyme catalyses RNA(n) + a ribonucleoside 5'-triphosphate = RNA(n+1) + diphosphate. It catalyses the reaction 4-O-(ADP-D-ribosyl)-L-aspartyl-[protein] + H2O = L-aspartyl-[protein] + ADP-D-ribose + H(+). It carries out the reaction 5-O-(ADP-D-ribosyl)-L-glutamyl-[protein] + H2O = L-glutamyl-[protein] + ADP-D-ribose + H(+). The catalysed reaction is RNA(n) + ATP = RNA(n)-3'-adenine ribonucleotide + diphosphate. The enzyme catalyses ADP-alpha-D-ribose 1''-phosphate + H2O = ADP-D-ribose + phosphate. Inactive precursor of the viral replicase, which is activated by cleavages carried out by the viral protease nsP2. In terms of biological role, the early replication complex formed by the polyprotein P123 and nsP4 synthesizes minus-strand RNAs. As soon P123 is cleaved into mature proteins, the plus-strand RNAs synthesis begins. Functionally, cytoplasmic capping enzyme that catalyzes two virus-specific reactions: methyltransferase and guanylyltransferase. mRNA-capping is necessary since all viral RNAs are synthesized in the cytoplasm, and host capping enzymes are restricted to the nucleus. The enzymatic reaction involves a covalent link between 7-methyl-GMP and nsP1, whereas eukaryotic capping enzymes form a covalent complex only with GMP. nsP1 capping consists in the following reactions: GTP is first methylated into 7-methyl-GMP and then is covalently linked to nsP1 to form the m7GMp-nsP1 complex from which 7-methyl-GMP complex is transferred to the mRNA to create the cap structure. NsP1 is also needed for the initiation of the minus-strand RNAs synthesis. At the initiation of virus replication, mediates the assembly of the viral replication complex made of the non-structural proteins, the association of this complex with the inner face of the plasma membrane and the formation of membranous spherules that serve as replication complex factories. Forms the neck of these spherules with a central channel for mediating communication and the passage of RNA, nucleotides, and small proteins between the viral replication complex and the host cytoplasm. Palmitoylated nsP1 is remodeling host cell cytoskeleton, and induces filopodium-like structure formation at the surface of the host cell. Its function is as follows. Multifunctional protein whose N-terminus is part of the RNA polymerase complex and displays NTPase, RNA triphosphatase and helicase activities. NTPase and RNA triphosphatase are involved in viral RNA capping and helicase keeps a check on the dsRNA replication intermediates. The C-terminus harbors a protease that specifically cleaves the polyproteins and releases the mature proteins. Required for the shutoff of minus-strand RNAs synthesis. Specifically inhibits the host IFN response by promoting the nuclear export of host STAT1. Also inhibits host transcription by inducing the rapid proteasome-dependent degradation of POLR2A, a catalytic subunit of the RNAPII complex. The resulting inhibition of cellular protein synthesis serves to ensure maximal viral gene expression and to evade host immune response. Seems to be essential for minus-strand RNAs and subgenomic 26S mRNAs synthesis. Displays mono-ADP-ribosylhydrolase activity. ADP-ribosylation is a post-translational modification that controls various processes of the host cell and the virus probably needs to revert it for optimal viral replication. Binds proteins of G3BP family and sequesters them into the viral RNA replication complexes thereby inhibiting the formation of host stress granules on viral mRNAs. The nsp3-G3BP complexes bind viral RNAs and probably orchestrate the assembly of viral replication complexes, thanks to the ability of G3BP family members to self-assemble and bind DNA. In terms of biological role, RNA dependent RNA polymerase. Replicates genomic and antigenomic RNA by recognizing replications specific signals. The early replication complex formed by the polyprotein P123 and nsP4 synthesizes minus-strand RNAs. The late replication complex composed of fully processed nsP1-nsP4 is responsible for the production of genomic and subgenomic plus-strand RNAs. This is Polyprotein P1234 from Chikungunya virus (strain S27-African prototype) (CHIKV).